Consider the following 259-residue polypeptide: Protein unc-50 homolog (259 aa).

Met1 is modified (N-acetylmethionine). Polar residues predominate over residues 1-17 (MLPSTSVNSPAQGNGVL). Residues 1–22 (MLPSTSVNSPAQGNGVLSSRDA) form a disordered region. Over 1 to 82 (MLPSTSVNSP…TKDQWARDDP (82 aa)) the chain is Cytoplasmic. Ser6 carries the phosphoserine modification. A helical membrane pass occupies residues 83–103 (AFLVLLSIWLCVSTIGFGFVL). Residues 104–115 (DMGFFETIKLLL) are Lumenal-facing. A helical transmembrane segment spans residues 116-136 (WVVFIDCVGVGLLISTLMWFI). The Cytoplasmic portion of the chain corresponds to 137-163 (SNKYLVKRQSRDYDVEWGYAFDVHLNA). The chain crosses the membrane as a helical span at residues 164-184 (FYPLLVILHFIQLFFINHVIL). Over 185 to 187 (TDT) the chain is Lumenal. A helical transmembrane segment spans residues 188–208 (FIGYLVGNTLWLVAVGYYIYV). Residues 209–222 (TFLGYSALPFLKNT) lie on the Cytoplasmic side of the membrane. A helical membrane pass occupies residues 223-243 (VILLYPFAPLILLYGLSLALG). Residues 244-259 (WNFTHTLCSFYKYRVK) lie on the Lumenal side of the membrane.

The protein belongs to the unc-50 family.

Its subcellular location is the nucleus inner membrane. The protein localises to the golgi apparatus membrane. Functionally, involved in the cell surface expression of neuronal nicotinic receptors. Binds RNA. The polypeptide is Protein unc-50 homolog (UNC50) (Bos taurus (Bovine)).